Here is an 82-residue protein sequence, read N- to C-terminus: Penaeidin-3e (82 aa).

An N-terminal signal peptide occupies residues 1 to 19 (MRLVVCLVFLAPFALVCHG). Residue Gln20 is modified to Pyrrolidone carboxylic acid. Cystine bridges form between Cys51-Cys66, Cys55-Cys73, and Cys67-Cys74. Ser81 is subject to Serine amide.

Belongs to the penaeidin family.

It is found in the cytoplasmic granule. Its function is as follows. Antibacterial and antifungal activity. Presents chitin-binding activity. The polypeptide is Penaeidin-3e (Penaeus vannamei (Whiteleg shrimp)).